Here is a 60-residue protein sequence, read N- to C-terminus: Ferredoxin (60 aa).

2 4Fe-4S ferredoxin-type domains span residues 2-29 (KVRV…LGDD) and 30-60 (GKAK…SVEE). The [4Fe-4S] cluster site is built by cysteine 10, cysteine 13, and cysteine 16. A disulfide bond links cysteine 20 and cysteine 43. Residue cysteine 51 participates in [4Fe-4S] cluster binding.

As to quaternary structure, monomer. The cofactor is [4Fe-4S] cluster.

In terms of biological role, ferredoxins are iron-sulfur proteins that transfer electrons in a wide variety of metabolic reactions. The chain is Ferredoxin (fdx) from Thermotoga maritima (strain ATCC 43589 / DSM 3109 / JCM 10099 / NBRC 100826 / MSB8).